Reading from the N-terminus, the 230-residue chain is Protein CWC15 homolog B (230 aa).

Positions 1 to 126 (MTTAARPTFE…DEDSDDDTAA (126 aa)) are disordered. A compositionally biased stretch (polar residues) spans 22 to 34 (DLSQLSKQYSSRD). Basic and acidic residues predominate over residues 52–84 (EEVRSRDFRRELEERERVAVRDKNRDRPTREHT). The segment covering 102–124 (DADDPLTDEDADEDSDEDSDDDT) has biased composition (acidic residues). Residues 121–165 (DDDTAALLAELEKIKKERAEEQVRKELEQKAEEERIRMENILSGN) are a coiled coil.

This sequence belongs to the CWC15 family. Identified in the spliceosome C complex. Component of the minor spliceosome, which splices U12-type introns.

Its subcellular location is the nucleus. In terms of biological role, involved in pre-mRNA splicing as component of the spliceosome. This Xenopus laevis (African clawed frog) protein is Protein CWC15 homolog B (cwc15-b).